Reading from the N-terminus, the 750-residue chain is Signal transducer and activator of transcription 1-alpha/beta (750 aa).

Serine 2 bears the N-acetylserine mark. Lysine 114, lysine 175, lysine 296, lysine 366, lysine 525, and lysine 637 each carry N6-methyllysine. Residues 136-317 (LDKQKELDSK…LFQQLIQSSF (182 aa)) are a coiled coil. The SH2 domain occupies 573 to 670 (WNDGCIMGFI…ENPLKYLYPN (98 aa)). Glutamate 657 carries the ADP-ribosyl glutamic acid; by PARP14 modification. Lysine 665 bears the N6-methyllysine mark. Residue tyrosine 701 is modified to Phosphotyrosine; by JAK1, JAK2 or TYK2. Lysine 703 participates in a covalent cross-link: Glycyl lysine isopeptide (Lys-Gly) (interchain with G-Cter in SUMO1); alternate. Residue lysine 703 forms a Glycyl lysine isopeptide (Lys-Gly) (interchain with G-Cter in SUMO2); alternate linkage. An ADP-ribosyl glutamic acid; by PARP14 modification is found at glutamate 705. The residue at position 708 (serine 708) is a Phosphoserine; by IKKE. Serine 727 is subject to Phosphoserine; by CAMK2 and MAPK14. Serine 745 is subject to Phosphoserine; by IKKE. At threonine 749 the chain carries Phosphothreonine; by IKKB.

It belongs to the transcription factor STAT family. As to quaternary structure, isoform alpha homodimerizes upon IFN-gamma induced phosphorylation. Heterodimer with STAT2 upon IFN-alpha/beta induced phosphorylation. The heterodimer STAT1:STAT2 forms the interferon-stimulated gene factor 3 complex (ISGF3) with IRF9. Interacts (phosphorylated at Ser-727) with PIAS1; the interaction results in release of STAT1 from its target gene. Interacts with IFNAR1; the interaction requires the phosphorylation of IFNAR1 at 'Tyr-466'. Interacts with IFNAR2. Found in a complex with NMI and CREBBP/CBP. Interacts with NMI which is required for CREBBP/CBP recruitment to the complex. Interacts with PTK2/FAK1. Interacts with SRC. Interacts with ERBB4 (phosphorylated). Interacts with PARP9 and DTX3L independently of IFN-beta or IFN-gamma-mediated STAT1 'Tyr-701' phosphorylation. Interacts with histone acetyltransferase EP300/p300 in response to INF-gamma stimulation. Independently of its phosphorylation status, interacts with OTOP1. Interacts with IFNGR1. Interacts with STAT4. (Microbial infection) Interacts with Sendai virus C', C, Y1 and Y2 proteins, preventing activation of ISRE and GAS promoter. In terms of assembly, (Microbial infection) Interacts with Nipah virus P, V and W proteins preventing activation of ISRE and GAS promoter. As to quaternary structure, (Microbial infection) Interacts with Rabies virus phosphoprotein preventing activation of ISRE and GAS promoter. (Microbial infection) Interacts with HCV core protein; the interaction results in STAT1 degradation. In terms of assembly, (Microbial infection) Interacts with ebolavirus protein VP24. As to quaternary structure, (Microbial infection) Interacts with Epstein-Barr virus (EBV) tegument protein BGLF2; this interaction leads to STAT1 dephosphorylation and inhibition. (Microbial infection) Interacts (via N-terminus) with measles V protein; this interaction inhibits STAT1 phosphorylation by Jak1 and thereby the type I interferon signaling pathway. Deubiquitinated by USP13; leading to STAT1 stabilization and positive regulation of type I and type II IFN signalings. In terms of processing, phosphorylated on tyrosine and serine residues in response to a variety of cytokines/growth hormones including IFN-alpha, IFN-gamma, PDGF and EGF. Activated KIT promotes phosphorylation on tyrosine residues and subsequent translocation to the nucleus. Upon EGF stimulation, phosphorylation on Tyr-701 (lacking in beta form) by JAK1, JAK2 or TYK2 promotes dimerization and subsequent translocation to the nucleus. Growth hormone (GH) activates STAT1 signaling only via JAK2. Tyrosine phosphorylated in response to constitutively activated FGFR1, FGFR2, FGFR3 and FGFR4. Phosphorylation on Ser-727 by several kinases including MAPK14, ERK1/2, CAMK2/CAMKII and CK2 in response to IFN-gamma stimulation, is required for maximal transcriptional activity. Phosphorylated on Ser-727 by CAMK2/CAMKII in response to IFN-gamma stimulation and calcium mobilization, promoting activity. Phosphorylated by CAMK2/CAMKII in response to IFN-beta stimulation and calcium mobilization in epithelial cells, promoting activity. Phosphorylation on Ser-727 promotes sumoylation though increasing interaction with PIAS. Phosphorylation on Ser-727 by PRKCD induces apoptosis in response to DNA-damaging agents. Phosphorylated on tyrosine residues when PTK2/FAK1 is activated; most likely this is catalyzed by a SRC family kinase. Dephosphorylation on tyrosine residues by PTPN2 negatively regulates interferon-mediated signaling. Upon viral infection or IFN induction, phosphorylation on Ser-708 occurs much later than phosphorylation on Tyr-701 and is required for the binding of ISGF3 on the ISREs of a subset of IFN-stimulated genes IKBKE-dependent. Phosphorylation at Tyr-701 and Ser-708 are mutually exclusive, phosphorylation at Ser-708 requires previous dephosphorylation of Tyr-701. Phosphorylation at Thr-749 by IKBKB/IKKB promotes transcriptional activation of ARID5A and IL12B by STAT1. Phosphorylation at Thr-749 restricts interferon signaling and anti-inflammatory responses and promotes innate inflammatory responses. Post-translationally, sumoylated with SUMO1, SUMO2 and SUMO3. Sumoylation is enhanced by IFN-gamma-induced phosphorylation on Ser-727, and by interaction with PIAS proteins. Enhances the transactivation activity. ISGylated. In terms of processing, mono-ADP-ribosylated at Glu-657 and Glu-705 by PARP14; ADP-ribosylation prevents phosphorylation at Tyr-701. However, the role of ADP-ribosylation in the prevention of phosphorylation has been called into question and the lack of phosphorylation may be due to sumoylation of Lys-703. Post-translationally, monomethylated at Lys-525 by SETD2; monomethylation is necessary for phosphorylation at Tyr-701, translocation into the nucleus and activation of the antiviral defense. (Microbial infection) Ubiquitinated by Herpes simplex virus 2 E3 ubiquitin ligase ICP22.

It localises to the cytoplasm. The protein resides in the nucleus. Its function is as follows. Signal transducer and transcription activator that mediates cellular responses to interferons (IFNs), cytokine KITLG/SCF and other cytokines and other growth factors. Following type I IFN (IFN-alpha and IFN-beta) binding to cell surface receptors, signaling via protein kinases leads to activation of Jak kinases (TYK2 and JAK1) and to tyrosine phosphorylation of STAT1 and STAT2. The phosphorylated STATs dimerize and associate with ISGF3G/IRF-9 to form a complex termed ISGF3 transcription factor, that enters the nucleus. ISGF3 binds to the IFN stimulated response element (ISRE) to activate the transcription of IFN-stimulated genes (ISG), which drive the cell in an antiviral state. In response to type II IFN (IFN-gamma), STAT1 is tyrosine- and serine-phosphorylated. It then forms a homodimer termed IFN-gamma-activated factor (GAF), migrates into the nucleus and binds to the IFN gamma activated sequence (GAS) to drive the expression of the target genes, inducing a cellular antiviral state. Becomes activated in response to KITLG/SCF and KIT signaling. May mediate cellular responses to activated FGFR1, FGFR2, FGFR3 and FGFR4. Following bacterial lipopolysaccharide (LPS)-induced TLR4 endocytosis, phosphorylated at Thr-749 by IKBKB which promotes binding of STAT1 to the 5'-TTTGAGGC-3' sequence in the ARID5A promoter, resulting in transcriptional activation of ARID5A and subsequent ARID5A-mediated stabilization of IL6. Phosphorylation at Thr-749 also promotes binding of STAT1 to the 5'-TTTGAGTC-3' sequence in the IL12B promoter and activation of IL12B transcription. Involved in food tolerance in small intestine: associates with the Gasdermin-D, p13 cleavage product (13 kDa GSDMD) and promotes transcription of CIITA, inducing type 1 regulatory T (Tr1) cells in upper small intestine. The protein is Signal transducer and activator of transcription 1-alpha/beta (STAT1) of Homo sapiens (Human).